The following is a 370-amino-acid chain: Histidinol-phosphate aminotransferase 3 (370 aa).

K229 is modified (N6-(pyridoxal phosphate)lysine).

This sequence belongs to the class-II pyridoxal-phosphate-dependent aminotransferase family. Histidinol-phosphate aminotransferase subfamily. Homodimer. The cofactor is pyridoxal 5'-phosphate.

It catalyses the reaction L-histidinol phosphate + 2-oxoglutarate = 3-(imidazol-4-yl)-2-oxopropyl phosphate + L-glutamate. It participates in amino-acid biosynthesis; L-histidine biosynthesis; L-histidine from 5-phospho-alpha-D-ribose 1-diphosphate: step 7/9. In Rhizobium meliloti (strain 1021) (Ensifer meliloti), this protein is Histidinol-phosphate aminotransferase 3 (hisC3).